The chain runs to 342 residues: Nicotinate-nucleotide--dimethylbenzimidazole phosphoribosyltransferase (342 aa).

Catalysis depends on glutamate 311, which acts as the Proton acceptor.

This sequence belongs to the CobT family.

It catalyses the reaction 5,6-dimethylbenzimidazole + nicotinate beta-D-ribonucleotide = alpha-ribazole 5'-phosphate + nicotinate + H(+). It participates in nucleoside biosynthesis; alpha-ribazole biosynthesis; alpha-ribazole from 5,6-dimethylbenzimidazole: step 1/2. Catalyzes the synthesis of alpha-ribazole-5'-phosphate from nicotinate mononucleotide (NAMN) and 5,6-dimethylbenzimidazole (DMB). This is Nicotinate-nucleotide--dimethylbenzimidazole phosphoribosyltransferase from Shewanella loihica (strain ATCC BAA-1088 / PV-4).